The sequence spans 109 residues: MAYRALMVLRMDPADAEHVAAAFAEHDTTELPLEIGVRRRVLFRFHDLYMHLIEADDDIMERLYQARSHPLFQEVNERVGQYLTPYAQDWEELKDSKAEVFYSWTAPDS.

As to quaternary structure, homodimer.

It carries out the reaction tetracenomycin F2 + H(+) = tetracenomycin F1 + H2O. The protein operates within antibiotic biosynthesis; tetracenomycin C biosynthesis. Catalyzing the conversion of tetracenomycin F2 to tetracenomycin F1. This chain is Tetracenomycin F2 cyclase (tcmI), found in Streptomyces glaucescens.